Here is a 259-residue protein sequence, read N- to C-terminus: Insulin-like growth factor-binding protein 4 (259 aa).

The signal sequence occupies residues 1–22; the sequence is MLPLCLVAALLLSASGPRPSLG. Positions 24–104 constitute an IGFBP N-terminal domain; that stretch reads EAIHCPPCSE…MHGQGLCMEL (81 aa). Cystine bridges form between Cys-28–Cys-54, Cys-31–Cys-56, Cys-39–Cys-57, Cys-45–Cys-60, Cys-68–Cys-81, and Cys-75–Cys-101. The segment at 115-136 is disordered; that stretch reads QPSDKDEGDHPNNSFSPCSPQD. The N-linked (GlcNAc...) asparagine glycan is linked to Asn-126. 4 cysteine pairs are disulfide-bonded: Cys-132/Cys-139, Cys-175/Cys-205, Cys-216/Cys-227, and Cys-229/Cys-250. Residues 172-250 enclose the Thyroglobulin type-1 domain; sequence QGSCQSELHR…GLEPKGELDC (79 aa). Ser-256 carries the post-translational modification Phosphoserine.

As to quaternary structure, binds IGF2 more than IGF1.

The protein localises to the secreted. Functionally, IGF-binding proteins prolong the half-life of the IGFs and have been shown to either inhibit or stimulate the growth promoting effects of the IGFs on cell culture. They alter the interaction of IGFs with their cell surface receptors. This chain is Insulin-like growth factor-binding protein 4 (IGFBP4), found in Sus scrofa (Pig).